Reading from the N-terminus, the 100-residue chain is Small ribosomal subunit protein uS14c (100 aa).

The protein belongs to the universal ribosomal protein uS14 family. In terms of assembly, part of the 30S ribosomal subunit.

The protein localises to the plastid. The protein resides in the chloroplast. Binds 16S rRNA, required for the assembly of 30S particles. This chain is Small ribosomal subunit protein uS14c, found in Cyanidioschyzon merolae (strain NIES-3377 / 10D) (Unicellular red alga).